A 343-amino-acid polypeptide reads, in one-letter code: Mas-related G-protein coupled receptor member F (343 aa).

Over 1 to 44 (MAGNCSWEAHPGNRNKMCPGLSEAPELYSRGFLTIEQIAMLPPP) the chain is Extracellular. N4 carries an N-linked (GlcNAc...) asparagine glycan. The chain crosses the membrane as a helical span at residues 45 to 66 (AVMNYIFLLLCLCGLVGNGLVL). Topologically, residues 67 to 82 (WFFGFSIKRNPFSIYF) are cytoplasmic. The chain crosses the membrane as a helical span at residues 83-104 (LHLASADVGYLFSKAVFSILNT). Over 105 to 123 (GGFLGTFADYIRSVCRVLG) the chain is Extracellular. Residues 124–144 (LCMFLTGVSLLPAVSAERCAS) form a helical membrane-spanning segment. Topologically, residues 145 to 160 (VIFPAWYWRRRPKRLS) are cytoplasmic. A helical transmembrane segment spans residues 161 to 181 (AVVCALLWVLSLLVTCLHNYF). Residues 182 to 198 (CVFLGRGAPGAACRHMD) lie on the Extracellular side of the membrane. Residues 199 to 220 (IFLGILLFLLCCPLMVLPCLAL) traverse the membrane as a helical segment. The Cytoplasmic portion of the chain corresponds to 221–241 (ILHVECRARRRQRSAKLNHVI). The chain crosses the membrane as a helical span at residues 242 to 263 (LAMVSVFLVSSIYLGIDWFLFW). The Extracellular segment spans residues 264 to 273 (VFQIPAPFPE). The helical transmembrane segment at 274–294 (YVTDLCICINSSAKPIVYFLA) threads the bilayer. Residues 295–343 (GRDKSQRLWEPLRVVFQRALRDGAELGEAGGSTPNTVTMEMQCPPGNAS) are Cytoplasmic-facing. Residues 320–343 (LGEAGGSTPNTVTMEMQCPPGNAS) are disordered.

Belongs to the G-protein coupled receptor 1 family. Mas subfamily.

The protein localises to the cell membrane. Functionally, orphan receptor. May bind to a neuropeptide and may regulate nociceptor function and/or development, including the sensation or modulation of pain. This is Mas-related G-protein coupled receptor member F (MRGPRF) from Homo sapiens (Human).